Reading from the N-terminus, the 95-residue chain is Acylphosphatase (95 aa).

Positions 10-95 (CIHVTVSGKV…VEDYSDFRVR (86 aa)) constitute an Acylphosphatase-like domain. Active-site residues include R25 and N43.

This sequence belongs to the acylphosphatase family.

The catalysed reaction is an acyl phosphate + H2O = a carboxylate + phosphate + H(+). The polypeptide is Acylphosphatase (acyP) (Coxiella burnetii (strain RSA 493 / Nine Mile phase I)).